The sequence spans 354 residues: Ferrochelatase (354 aa).

Fe cation is bound by residues His-214 and Glu-295.

It belongs to the ferrochelatase family.

It localises to the cytoplasm. The catalysed reaction is heme b + 2 H(+) = protoporphyrin IX + Fe(2+). It participates in porphyrin-containing compound metabolism; protoheme biosynthesis; protoheme from protoporphyrin-IX: step 1/1. In terms of biological role, catalyzes the ferrous insertion into protoporphyrin IX. The sequence is that of Ferrochelatase from Burkholderia ambifaria (strain ATCC BAA-244 / DSM 16087 / CCUG 44356 / LMG 19182 / AMMD) (Burkholderia cepacia (strain AMMD)).